Consider the following 288-residue polypeptide: Quinate/shikimate dehydrogenase (288 aa).

Residues K71 and D107 each contribute to the substrate site. Residues 132 to 135, 155 to 158, K205, 232 to 235, and G255 contribute to the NAD(+) site; these read AGGA, NRRD, and CVYN.

It belongs to the shikimate dehydrogenase family. As to quaternary structure, homodimer.

It catalyses the reaction L-quinate + NAD(+) = 3-dehydroquinate + NADH + H(+). The catalysed reaction is L-quinate + NADP(+) = 3-dehydroquinate + NADPH + H(+). The enzyme catalyses shikimate + NADP(+) = 3-dehydroshikimate + NADPH + H(+). It carries out the reaction shikimate + NAD(+) = 3-dehydroshikimate + NADH + H(+). The protein operates within metabolic intermediate biosynthesis; chorismate biosynthesis; chorismate from D-erythrose 4-phosphate and phosphoenolpyruvate: step 4/7. Functionally, the actual biological function of YdiB remains unclear, nor is it known whether 3-dehydroshikimate or quinate represents the natural substrate. Catalyzes the reversible NAD-dependent reduction of both 3-dehydroshikimate (DHSA) and 3-dehydroquinate to yield shikimate (SA) and quinate, respectively. It can use both NAD or NADP for catalysis, however it has higher catalytic efficiency with NAD. The polypeptide is Quinate/shikimate dehydrogenase (Escherichia coli O17:K52:H18 (strain UMN026 / ExPEC)).